A 276-amino-acid polypeptide reads, in one-letter code: Large ribosomal subunit protein uL2 (276 aa).

Residues 223-276 (GVAMNPVDHPHGGGEGRGKGHHPTSPWGLPTKGYKTRRGKRPSDKFIVRRRNEV) form a disordered region. Composition is skewed to basic and acidic residues over residues 230–240 (DHPHGGGEGRG) and 263–276 (RPSD…RNEV).

It belongs to the universal ribosomal protein uL2 family. Part of the 50S ribosomal subunit. Forms a bridge to the 30S subunit in the 70S ribosome.

Its function is as follows. One of the primary rRNA binding proteins. Required for association of the 30S and 50S subunits to form the 70S ribosome, for tRNA binding and peptide bond formation. It has been suggested to have peptidyltransferase activity; this is somewhat controversial. Makes several contacts with the 16S rRNA in the 70S ribosome. The chain is Large ribosomal subunit protein uL2 from Thermotoga maritima (strain ATCC 43589 / DSM 3109 / JCM 10099 / NBRC 100826 / MSB8).